Consider the following 71-residue polypeptide: uncharacterized protein (71 aa).

This is an uncharacterized protein from Haemophilus influenzae (strain ATCC 51907 / DSM 11121 / KW20 / Rd).